The sequence spans 453 residues: Glutamyl-tRNA(Gln) amidotransferase subunit A (453 aa).

Residues K53 and S128 each act as charge relay system in the active site. The active-site Acyl-ester intermediate is S152.

Belongs to the amidase family. GatA subfamily. In terms of assembly, heterotrimer of A, B and C subunits.

The enzyme catalyses L-glutamyl-tRNA(Gln) + L-glutamine + ATP + H2O = L-glutaminyl-tRNA(Gln) + L-glutamate + ADP + phosphate + H(+). Its function is as follows. Allows the formation of correctly charged Gln-tRNA(Gln) through the transamidation of misacylated Glu-tRNA(Gln) in organisms which lack glutaminyl-tRNA synthetase. The reaction takes place in the presence of glutamine and ATP through an activated gamma-phospho-Glu-tRNA(Gln). The chain is Glutamyl-tRNA(Gln) amidotransferase subunit A from Helicobacter pylori (strain P12).